Reading from the N-terminus, the 543-residue chain is Steroid receptor seven-up, isoforms B/C (543 aa).

The segment at 38–191 (PPHSAWHEPP…HSQSSNSGSQ (154 aa)) is disordered. A compositionally biased stretch (low complexity) spans 56 to 68 (AASAGPGTTTGSV). Residues 83 to 101 (QQSAVIKQDLSCPSLNQAG) are compositionally biased toward polar residues. The span at 122–141 (GSAGGHHSGSGSGSGSGVNP) shows a compositional bias: gly residues. The segment covering 158-170 (MLTSIKGQPTGCG) has biased composition (polar residues). Over residues 171–191 (STTPSSQANSSHSQSSNSGSQ) the composition is skewed to low complexity. Positions 197 to 272 (NIECVVCGDK…MGMRREAVQR (76 aa)) form a DNA-binding region, nuclear receptor. 2 NR C4-type zinc fingers span residues 200–220 (CVVC…CEGC) and 236–260 (CRGS…LKKC). Residues 307–532 (YLSSYISLLL…TLIRDMLLSG (226 aa)) form the NR LBD domain.

The protein belongs to the nuclear hormone receptor family. NR2 subfamily. In terms of tissue distribution, expressed in several embryonic tissues; dorsal vessel, oenocyte and fat body. CNS expression is dynamic and confined to temporally restricted subsections of the NB lineage; expressed in many NB and GMCs, but only a small number of neurons.

It localises to the nucleus. Receptor that is required in photoreceptors R1, R3, R4 and R6 during eye development; generation of the ganglion mother cell-2 (GMC-2) fate in the nb7-3 lineage, coinciding with the transition in the expression of HB to KR in the neuroblasts (NBs). The chain is Steroid receptor seven-up, isoforms B/C (svp) from Drosophila melanogaster (Fruit fly).